The primary structure comprises 120 residues: Large ribosomal subunit protein uL18c (120 aa).

It belongs to the universal ribosomal protein uL18 family. In terms of assembly, part of the 50S ribosomal subunit; contacts the 5S rRNA.

It is found in the plastid. The protein localises to the chloroplast. Its function is as follows. Binds 5S rRNA, forms part of the central protuberance of the 50S subunit. The protein is Large ribosomal subunit protein uL18c (rpl18) of Pyropia yezoensis (Susabi-nori).